The primary structure comprises 133 residues: ATP synthase epsilon chain, chloroplastic (133 aa).

It belongs to the ATPase epsilon chain family. F-type ATPases have 2 components, CF(1) - the catalytic core - and CF(0) - the membrane proton channel. CF(1) has five subunits: alpha(3), beta(3), gamma(1), delta(1), epsilon(1). CF(0) has three main subunits: a, b and c.

The protein resides in the plastid. The protein localises to the chloroplast thylakoid membrane. In terms of biological role, produces ATP from ADP in the presence of a proton gradient across the membrane. The protein is ATP synthase epsilon chain, chloroplastic of Chara vulgaris (Common stonewort).